A 92-amino-acid chain; its full sequence is Large ribosomal subunit protein eL43 (92 aa).

The C4-type zinc-finger motif lies at 39–60; that stretch reads CEFCGKYAVKRKAVGIWGCKAC.

The protein belongs to the eukaryotic ribosomal protein eL43 family.

The chain is Large ribosomal subunit protein eL43 (RPL37A) from Gossypium hirsutum (Upland cotton).